The chain runs to 145 residues: Probable 4-amino-4-deoxy-L-arabinose-phosphoundecaprenol flippase subunit ArnF (145 aa).

Over 1–3 (MAH) the chain is Cytoplasmic. A helical transmembrane segment spans residues 4-24 (LTLSIRGLLLALMSVLLISVA). At 25-61 (QLSMKWGMGTLNQLWSDLVMLWQGEDYSSLFSQALAP) the chain is on the periplasmic side. Residues 62–82 (VMAVGAGLFCYALSMACWVMA) traverse the membrane as a helical segment. At 83-89 (LKRLPLS) the chain is on the cytoplasmic side. Residues 90–110 (IAYPLLSLSYVLVYLGAVYLP) form a helical membrane-spanning segment. Residues 111 to 114 (WLNE) lie on the Periplasmic side of the membrane. Residues 115-135 (PLSWVKGTGIFLILLGLIFVL) traverse the membrane as a helical segment. The Cytoplasmic portion of the chain corresponds to 136–145 (PKKNQTSDKS).

This sequence belongs to the ArnF family. In terms of assembly, heterodimer of ArnE and ArnF.

The protein resides in the cell inner membrane. It participates in bacterial outer membrane biogenesis; lipopolysaccharide biosynthesis. Translocates 4-amino-4-deoxy-L-arabinose-phosphoundecaprenol (alpha-L-Ara4N-phosphoundecaprenol) from the cytoplasmic to the periplasmic side of the inner membrane. In Shewanella sediminis (strain HAW-EB3), this protein is Probable 4-amino-4-deoxy-L-arabinose-phosphoundecaprenol flippase subunit ArnF.